The chain runs to 130 residues: Large ribosomal subunit protein bL19 (130 aa).

Belongs to the bacterial ribosomal protein bL19 family.

Functionally, this protein is located at the 30S-50S ribosomal subunit interface and may play a role in the structure and function of the aminoacyl-tRNA binding site. The chain is Large ribosomal subunit protein bL19 from Methylorubrum populi (strain ATCC BAA-705 / NCIMB 13946 / BJ001) (Methylobacterium populi).